A 196-amino-acid chain; its full sequence is Na(+)-translocating ferredoxin:NAD(+) oxidoreductase complex subunit E (196 aa).

5 helical membrane-spanning segments follow: residues 38–58 (MGMG…ISAL), 68–88 (IPAF…LMKA), 92–112 (ALDA…IILA), 127–147 (FADA…LGSI), and 169–189 (VLLM…IGLI).

Belongs to the NqrDE/RnfAE family. In terms of assembly, the complex is composed of six subunits: RnfA, RnfB, RnfC, RnfD, RnfE and RnfG.

Its subcellular location is the cell membrane. It catalyses the reaction 2 reduced [2Fe-2S]-[ferredoxin] + Na(+)(in) + NAD(+) + H(+) = 2 oxidized [2Fe-2S]-[ferredoxin] + Na(+)(out) + NADH. Part of a membrane-bound complex that couples electron transfer with translocation of ions across the membrane. Couples electron transfer from reduced ferredoxin to NAD(+) with electrogenic movement of Na(+) out of the cell. Involved in caffeate respiration. This chain is Na(+)-translocating ferredoxin:NAD(+) oxidoreductase complex subunit E, found in Acetobacterium woodii (strain ATCC 29683 / DSM 1030 / JCM 2381 / KCTC 1655 / WB1).